We begin with the raw amino-acid sequence, 145 residues long: D-aminoacyl-tRNA deacylase (145 aa).

Positions 137 to 138 (GP) match the Gly-cisPro motif, important for rejection of L-amino acids motif.

The protein belongs to the DTD family. In terms of assembly, homodimer.

The protein resides in the cytoplasm. The enzyme catalyses glycyl-tRNA(Ala) + H2O = tRNA(Ala) + glycine + H(+). It carries out the reaction a D-aminoacyl-tRNA + H2O = a tRNA + a D-alpha-amino acid + H(+). An aminoacyl-tRNA editing enzyme that deacylates mischarged D-aminoacyl-tRNAs. Also deacylates mischarged glycyl-tRNA(Ala), protecting cells against glycine mischarging by AlaRS. Acts via tRNA-based rather than protein-based catalysis; rejects L-amino acids rather than detecting D-amino acids in the active site. By recycling D-aminoacyl-tRNA to D-amino acids and free tRNA molecules, this enzyme counteracts the toxicity associated with the formation of D-aminoacyl-tRNA entities in vivo and helps enforce protein L-homochirality. The chain is D-aminoacyl-tRNA deacylase from Shewanella piezotolerans (strain WP3 / JCM 13877).